The following is a 270-amino-acid chain: Probable inner membrane protein BTH_II0599 (270 aa).

Helical transmembrane passes span 24–44 (RNPL…MLVS), 45–65 (LVPV…AVGF), 98–118 (LLTL…CSAL), 150–170 (ALIA…APVL), 198–218 (VYGL…AALM), and 226–246 (YALM…YCSF).

It is found in the cell inner membrane. (Microbial infection) Probably transports the toxic C-terminal region of CdiA-2 from B.pseudomallei strain 1026b across the inner membrane to the cytoplasm, where CdiA has a toxic effect. Expression in E.coli makes the bacteria sensitive to the tRNase domain of B.pseudomallei strain 1026b CdiA-2. The sequence is that of Probable inner membrane protein BTH_II0599 from Burkholderia thailandensis (strain ATCC 700388 / DSM 13276 / CCUG 48851 / CIP 106301 / E264).